A 309-amino-acid polypeptide reads, in one-letter code: Cell division protein FtsQ (309 aa).

Topologically, residues 1–52 (MLALRGRRGKRVRYPADGVAEADEAFVLPRPLRRGVRFLISLGAGRIRFPNH) are cytoplasmic. A helical transmembrane segment spans residues 53 to 74 (TGTVAAAAFMVATGLYGMSLGG). At 75–309 (HTQSFAQVST…KMLKAQEKRI (235 aa)) the chain is on the periplasmic side. The region spanning 89 to 157 (FAIEDVRVSG…GTIEVVLKER (69 aa)) is the POTRA domain.

It belongs to the FtsQ/DivIB family. FtsQ subfamily.

The protein resides in the cell inner membrane. Functionally, essential cell division protein. The chain is Cell division protein FtsQ from Rhizobium meliloti (strain 1021) (Ensifer meliloti).